A 1055-amino-acid chain; its full sequence is RapA guanosine triphosphatase-activating protein 1 (1055 aa).

6 disordered regions span residues 76–100 (LSPQ…EEER), 256–292 (NHQP…SSLT), 418–525 (QQLL…FLGV), 544–570 (THAT…SPPL), 603–629 (TTQL…PPSE), and 943–969 (NNNS…NLPT). A compositionally biased stretch (basic and acidic residues) spans 89–100 (QHEKITPEEEER). Composition is skewed to low complexity over residues 262 to 292 (STPR…SSLT), 442 to 455 (DFNL…NNNN), and 469 to 482 (TTTT…NNNN). The segment covering 483–494 (ISPQHSGTSGSP) has biased composition (polar residues). 2 stretches are compositionally biased toward low complexity: residues 603-622 (TTQL…TSQP) and 943-966 (NNNS…SDSN). In terms of domain architecture, Rap-GAP spans 779 to 1048 (LIQFEAKNIH…RTRKEFLHSF (270 aa)).

It is found in the cytoplasm. Its subcellular location is the cell cortex. Functionally, mediates the deactivation of rap1 and plays an important role in spatially and temporally regulating cell adhesion and chemotaxis by controlling attachment disassembly in the leading edge through the regulation of myosin II assembly and disassembly. Overexpression leads to defective chemotaxis. This chain is RapA guanosine triphosphatase-activating protein 1 (rapgap1), found in Dictyostelium discoideum (Social amoeba).